We begin with the raw amino-acid sequence, 344 residues long: Sesquiterpene synthase 9 (344 aa).

Mg(2+) is bound by residues Asp88, Asn224, Ser228, and Glu232. A DDXXD motif motif is present at residues 88–92 (DEYSD). Residues 224-232 (NDMLSWNVE) carry the NSE/DTE motif motif. (2E,6E)-farnesyl diphosphate-binding residues include Arg313 and Tyr314.

The protein belongs to the terpene synthase family. The cofactor is Mg(2+).

In terms of biological role, terpene cyclase that catalyzes the cyclization of farnesyl diphosphate (FPP) to a single major sesquiterpene scaffold whose chemical structure is still unknown. This chain is Sesquiterpene synthase 9, found in Postia placenta (strain ATCC 44394 / Madison 698-R) (Brown rot fungus).